The following is a 171-amino-acid chain: 3-hydroxydecanoyl-[acyl-carrier-protein] dehydratase (171 aa).

Histidine 70 is an active-site residue.

It belongs to the thioester dehydratase family. FabA subfamily. As to quaternary structure, homodimer.

It is found in the cytoplasm. The enzyme catalyses a (3R)-hydroxyacyl-[ACP] = a (2E)-enoyl-[ACP] + H2O. The catalysed reaction is (3R)-hydroxydecanoyl-[ACP] = (2E)-decenoyl-[ACP] + H2O. It carries out the reaction (2E)-decenoyl-[ACP] = (3Z)-decenoyl-[ACP]. It functions in the pathway lipid metabolism; fatty acid biosynthesis. Its function is as follows. Necessary for the introduction of cis unsaturation into fatty acids. Catalyzes the dehydration of (3R)-3-hydroxydecanoyl-ACP to E-(2)-decenoyl-ACP and then its isomerization to Z-(3)-decenoyl-ACP. Can catalyze the dehydratase reaction for beta-hydroxyacyl-ACPs with saturated chain lengths up to 16:0, being most active on intermediate chain length. The polypeptide is 3-hydroxydecanoyl-[acyl-carrier-protein] dehydratase (Azotobacter vinelandii (strain DJ / ATCC BAA-1303)).